The primary structure comprises 310 residues: Ribosomal RNA small subunit methyltransferase H (310 aa).

Residues 33-35, D53, F79, D100, and Q107 each bind S-adenosyl-L-methionine; that span reads AGH.

This sequence belongs to the methyltransferase superfamily. RsmH family.

It is found in the cytoplasm. The enzyme catalyses cytidine(1402) in 16S rRNA + S-adenosyl-L-methionine = N(4)-methylcytidine(1402) in 16S rRNA + S-adenosyl-L-homocysteine + H(+). Specifically methylates the N4 position of cytidine in position 1402 (C1402) of 16S rRNA. This is Ribosomal RNA small subunit methyltransferase H from Clostridium botulinum (strain Eklund 17B / Type B).